Consider the following 122-residue polypeptide: Large ribosomal subunit protein uL14 (122 aa).

This sequence belongs to the universal ribosomal protein uL14 family. Part of the 50S ribosomal subunit. Forms a cluster with proteins L3 and L19. In the 70S ribosome, L14 and L19 interact and together make contacts with the 16S rRNA in bridges B5 and B8.

Functionally, binds to 23S rRNA. Forms part of two intersubunit bridges in the 70S ribosome. This Maricaulis maris (strain MCS10) (Caulobacter maris) protein is Large ribosomal subunit protein uL14.